The following is a 356-amino-acid chain: Peptide chain release factor 1 (356 aa).

Gln-232 is modified (N5-methylglutamine).

This sequence belongs to the prokaryotic/mitochondrial release factor family. Post-translationally, methylated by PrmC. Methylation increases the termination efficiency of RF1.

It localises to the cytoplasm. Its function is as follows. Peptide chain release factor 1 directs the termination of translation in response to the peptide chain termination codons UAG and UAA. This is Peptide chain release factor 1 from Thermoanaerobacter pseudethanolicus (strain ATCC 33223 / 39E) (Clostridium thermohydrosulfuricum).